The chain runs to 219 residues: Probable nicotinate-nucleotide adenylyltransferase (219 aa).

The protein belongs to the NadD family.

The enzyme catalyses nicotinate beta-D-ribonucleotide + ATP + H(+) = deamido-NAD(+) + diphosphate. Its pathway is cofactor biosynthesis; NAD(+) biosynthesis; deamido-NAD(+) from nicotinate D-ribonucleotide: step 1/1. Functionally, catalyzes the reversible adenylation of nicotinate mononucleotide (NaMN) to nicotinic acid adenine dinucleotide (NaAD). This Erythrobacter litoralis (strain HTCC2594) protein is Probable nicotinate-nucleotide adenylyltransferase.